Here is a 956-residue protein sequence, read N- to C-terminus: Translation initiation factor IF-2 (956 aa).

The segment at 33 to 370 is disordered; it reads SHASSVEEAD…PVTERKFHEL (338 aa). Positions 46 to 60 are enriched in polar residues; the sequence is IASSFSAGVTKNVQA. The span at 63–73 shows a compositional bias: basic and acidic residues; sequence AKDKQVAEQKA. Positions 76 to 100 are enriched in low complexity; the sequence is AKATTPQPAASKAAEKPAAATQEAS. Composition is skewed to basic and acidic residues over residues 112–125, 134–143, and 179–192; these read FKAE…EQVA, SNDRKSDYRQ, and NDGH…DKNR. Positions 199–213 are enriched in low complexity; it reads RQQDTGRQGQTQAGA. 2 stretches are compositionally biased toward basic and acidic residues: residues 234 to 258 and 266 to 276; these read ARQR…RQEA and QTEDKKHREAS. A compositionally biased stretch (low complexity) spans 277–293; sequence AKATESVASMAAASVAK. Positions 303–320 are enriched in basic and acidic residues; the sequence is NRPDKGHDRDHGLEDGQK. Over residues 325–343 the composition is skewed to low complexity; it reads SWNSQNQVRNQKNSNWNNN. Positions 344–354 are enriched in basic residues; the sequence is KKNKKGKHHKN. Positions 457-626 constitute a tr-type G domain; that stretch reads ERAPVVTIMG…LLVAEVEELK (170 aa). The G1 stretch occupies residues 466-473; that stretch reads GHVDHGKT. 466–473 provides a ligand contact to GTP; that stretch reads GHVDHGKT. Positions 491 to 495 are G2; the sequence is GITQH. Positions 512–515 are G3; that stretch reads DTPG. Residues 512–516 and 566–569 contribute to the GTP site; these read DTPGH and NKID. A G4 region spans residues 566–569; the sequence is NKID. Positions 602–604 are G5; that stretch reads SAK.

It belongs to the TRAFAC class translation factor GTPase superfamily. Classic translation factor GTPase family. IF-2 subfamily.

The protein resides in the cytoplasm. Its function is as follows. One of the essential components for the initiation of protein synthesis. Protects formylmethionyl-tRNA from spontaneous hydrolysis and promotes its binding to the 30S ribosomal subunits. Also involved in the hydrolysis of GTP during the formation of the 70S ribosomal complex. The sequence is that of Translation initiation factor IF-2 from Streptococcus equi subsp. equi (strain 4047).